Consider the following 138-residue polypeptide: Ribulose bisphosphate carboxylase small subunit (138 aa).

The protein belongs to the RuBisCO small chain family. Heterohexadecamer of 8 large and 8 small subunits.

It is found in the plastid. It localises to the chloroplast. Functionally, ruBisCO catalyzes two reactions: the carboxylation of D-ribulose 1,5-bisphosphate, the primary event in carbon dioxide fixation, as well as the oxidative fragmentation of the pentose substrate in the photorespiration process. Both reactions occur simultaneously and in competition at the same active site. Although the small subunit is not catalytic it is essential for maximal activity. The chain is Ribulose bisphosphate carboxylase small subunit from Pyropia dentata (Red alga).